Consider the following 623-residue polypeptide: Calnexin (623 aa).

A signal peptide spans 1 to 21 (MLNRKWSFVFLTFLLVISVNA). D108 serves as a coordination point for Ca(2+). Cysteines 151 and 185 form a disulfide. Positions 155, 157, 176, and 183 each coordinate an alpha-D-glucoside. N202 carries an N-linked (GlcNAc...) asparagine glycan. Residues 260–337 (SLTPPKEIFD…QKPQDWDEDM (78 aa)) are disordered. Positions 266–276 (EIFDETDLKPE) are enriched in basic and acidic residues. The segment at 267-400 (IFDETDLKPE…RLIDNPNYFE (134 aa)) is p domain (Extended arm). Tandem repeats lie at residues 269 to 281 (DETD…WDER), 286 to 298 (DETA…WDEN), 305 to 317 (DESA…WNEE), 324 to 336 (DPEA…WDED), and 339 to 349 (GSWEAPLIDNP). 2 4 X approximate repeats regions span residues 269-336 (DETD…WDED) and 339-396 (GSWE…IDNP). 2 stretches are compositionally biased toward acidic residues: residues 277-287 (DWDEREQIEDE) and 314-323 (WNEEENELIP). C351 and C357 form a disulfide bridge. 3 repeat units span residues 358–368 (GTWKPPTIKNP), 372–382 (GKWVRPKIANP), and 386–396 (GKWSPRLIDNP). Position 416 (E416) interacts with an alpha-D-glucoside. D427 is a binding site for Ca(2+). The helical transmembrane segment at 480-500 (LWAVYILCILLPLIAIGVFCF) threads the bilayer. A disordered region spans residues 536–623 (IAEDEEDNQP…AKRRTARRGD (88 aa)). The segment covering 556-565 (IDEDEQDEVE) has biased composition (acidic residues). A compositionally biased stretch (low complexity) spans 566–581 (QQPSSSKTASSESSSA). Residues 614 to 623 (AKRRTARRGD) show a composition bias toward basic residues.

Belongs to the calreticulin family. Post-translationally, glycosylation is important for its biological activity.

The protein localises to the endoplasmic reticulum membrane. It localises to the cytoplasm. The protein resides in the perinuclear region. It is found in the cytoplasmic vesicle. In terms of biological role, calcium-binding protein that interacts with newly synthesized monoglucosylated glycoproteins in the endoplasmic reticulum. It may act in assisting protein assembly and/or in the retention within the ER of unassembled protein subunits. It seems to play a major role in the quality control apparatus of the ER by the retention of incorrectly folded proteins. Required for embryogenesis and larval development under heat and ER stress conditions. May be important for germ cell development. Involved in neuronal necrotic cell death. The polypeptide is Calnexin (Caenorhabditis briggsae).